The primary structure comprises 281 residues: Eukaryotic translation initiation factor 3 subunit G (281 aa).

The disordered stretch occupies residues Met-1–Gly-32. Positions Ala-202 to Lys-280 constitute an RRM domain.

The protein belongs to the eIF-3 subunit G family. In terms of assembly, component of the eukaryotic translation initiation factor 3 (eIF-3) complex.

The protein resides in the cytoplasm. In terms of biological role, RNA-binding component of the eukaryotic translation initiation factor 3 (eIF-3) complex, which is involved in protein synthesis of a specialized repertoire of mRNAs and, together with other initiation factors, stimulates binding of mRNA and methionyl-tRNAi to the 40S ribosome. The eIF-3 complex specifically targets and initiates translation of a subset of mRNAs involved in cell proliferation. This subunit can bind 18S rRNA. The polypeptide is Eukaryotic translation initiation factor 3 subunit G (Phaeosphaeria nodorum (strain SN15 / ATCC MYA-4574 / FGSC 10173) (Glume blotch fungus)).